A 214-amino-acid chain; its full sequence is Cell division protein SepF (214 aa).

Residues 25 to 51 (EDDDRGARAGGYSRRPREDRFEEEAYG) form a disordered region.

Belongs to the SepF family. Homodimer. Interacts with FtsZ.

The protein resides in the cytoplasm. In terms of biological role, cell division protein that is part of the divisome complex and is recruited early to the Z-ring. Probably stimulates Z-ring formation, perhaps through the cross-linking of FtsZ protofilaments. Its function overlaps with FtsA. The chain is Cell division protein SepF from Mycolicibacterium smegmatis (strain ATCC 700084 / mc(2)155) (Mycobacterium smegmatis).